A 395-amino-acid polypeptide reads, in one-letter code: Acid ceramidase (395 aa).

The signal sequence occupies residues 1–21 (MLGRSRLTFVLLAAAVTCAEA). Cysteines 31 and 340 form a disulfide. The active-site Nucleophile is Cys143. N-linked (GlcNAc...) asparagine glycans are attached at residues Asn173, Asn259, Asn286, and Asn348. A disulfide bridge connects residues Cys388 and Cys392.

Belongs to the acid ceramidase family. In terms of assembly, heterodimer; disulfide-linked. The heterodimer is composed of the disulfide-linked alpha and beta chains produced by autocatalytic cleavage of the precursor. Post-translationally, N-glycosylated. Proteolytically cleaved into two chains alpha and beta that remain associated via a disulfide bond. Cleavage gives rise to a conformation change that activates the enzyme. The same catalytic Cys residue mediates the autoproteolytic cleavage and subsequent hydrolysis of lipid substrates. The beta chain may undergo an additional C-terminal processing.

Its subcellular location is the lysosome. It localises to the secreted. The catalysed reaction is an N-acylsphing-4-enine + H2O = sphing-4-enine + a fatty acid. It catalyses the reaction N-dodecanoylsphing-4-enine + H2O = dodecanoate + sphing-4-enine. The enzyme catalyses N-tetradecanoylsphing-4-enine + H2O = tetradecanoate + sphing-4-enine. It carries out the reaction N-hexadecanoylsphing-4-enine + H2O = sphing-4-enine + hexadecanoate. The catalysed reaction is N-octadecanoylsphing-4-enine + H2O = sphing-4-enine + octadecanoate. It catalyses the reaction N-dodecanoyl-(4R)-hydroxysphinganine + H2O = (4R)-hydroxysphinganine + dodecanoate. The enzyme catalyses N-(dodecanoyl)-sphinganine + H2O = dodecanoate + sphinganine. It carries out the reaction N-(acetyl)-sphing-4-enine + H2O = sphing-4-enine + acetate. The catalysed reaction is N-(hexanoyl)sphing-4-enine + H2O = hexanoate + sphing-4-enine. It catalyses the reaction N-octanoylsphing-4-enine + H2O = octanoate + sphing-4-enine. The enzyme catalyses N-(9Z-octadecenoyl)-sphing-4-enine + H2O = sphing-4-enine + (9Z)-octadecenoate. It carries out the reaction N-dodecanoylethanolamine + H2O = dodecanoate + ethanolamine. Its pathway is lipid metabolism; sphingolipid metabolism. Lysosomal ceramidase that hydrolyzes sphingolipid ceramides into sphingosine and free fatty acids at acidic pH. Ceramides, sphingosine, and its phosphorylated form sphingosine-1-phosphate are bioactive lipids that mediate cellular signaling pathways regulating several biological processes including cell proliferation, apoptosis and differentiation. Has a higher catalytic efficiency towards C12-ceramides versus other ceramides. Also catalyzes the reverse reaction allowing the synthesis of ceramides from fatty acids and sphingosine. For the reverse synthetic reaction, the natural sphingosine D-erythro isomer is more efficiently utilized as a substrate compared to D-erythro-dihydrosphingosine and D-erythro-phytosphingosine, while the fatty acids with chain lengths of 12 or 14 carbons are the most efficiently used. Also has an N-acylethanolamine hydrolase activity. By regulating the levels of ceramides, sphingosine and sphingosine-1-phosphate in the epidermis, mediates the calcium-induced differentiation of epidermal keratinocytes. Also indirectly regulates tumor necrosis factor/TNF-induced apoptosis. By regulating the intracellular balance between ceramides and sphingosine, in adrenocortical cells, probably also acts as a regulator of steroidogenesis. The polypeptide is Acid ceramidase (Heterocephalus glaber (Naked mole rat)).